Reading from the N-terminus, the 962-residue chain is Alpha-glucan phosphorylase 1 (962 aa).

The N-terminal 63 residues, 1–63 (MDTMRISGVS…RSFLSVKSIS (63 aa)), are a transit peptide targeting the chloroplast. The tract at residues 525 to 552 (AKDAQNGVKTEQEEEKTAGEEEEDEVIP) is disordered. Residue K808 is modified to N6-(pyridoxal phosphate)lysine.

It belongs to the glycogen phosphorylase family. The cofactor is pyridoxal 5'-phosphate.

It localises to the plastid. Its subcellular location is the chloroplast stroma. It carries out the reaction [(1-&gt;4)-alpha-D-glucosyl](n) + phosphate = [(1-&gt;4)-alpha-D-glucosyl](n-1) + alpha-D-glucose 1-phosphate. Phosphorylase is an important allosteric enzyme in carbohydrate metabolism. Enzymes from different sources differ in their regulatory mechanisms and in their natural substrates. However, all known phosphorylases share catalytic and structural properties. May be not required for the degradation of starch, but the phosphorolysis of starch may play an important role in water stress tolerance. This Arabidopsis thaliana (Mouse-ear cress) protein is Alpha-glucan phosphorylase 1 (PHS1).